We begin with the raw amino-acid sequence, 98 residues long: Protein translation factor SUI1 homolog (98 aa).

This sequence belongs to the SUI1 family.

In Thermococcus kodakarensis (strain ATCC BAA-918 / JCM 12380 / KOD1) (Pyrococcus kodakaraensis (strain KOD1)), this protein is Protein translation factor SUI1 homolog.